We begin with the raw amino-acid sequence, 263 residues long: Phosphatidylglycerol--prolipoprotein diacylglyceryl transferase (263 aa).

4 helical membrane-spanning segments follow: residues 10–30 (VAIT…LFGF), 56–76 (MVTY…ILFY), 91–111 (IWNG…AMWL), and 117–137 (GLGF…GLFF). Arg-139 serves as a coordination point for a 1,2-diacyl-sn-glycero-3-phospho-(1'-sn-glycerol). 3 helical membrane passes run 171-191 (PSQL…LWVF), 199-219 (GHVS…VEFV), and 231-251 (FGWL…GLWL).

The protein belongs to the Lgt family.

The protein localises to the cell inner membrane. The enzyme catalyses L-cysteinyl-[prolipoprotein] + a 1,2-diacyl-sn-glycero-3-phospho-(1'-sn-glycerol) = an S-1,2-diacyl-sn-glyceryl-L-cysteinyl-[prolipoprotein] + sn-glycerol 1-phosphate + H(+). It functions in the pathway protein modification; lipoprotein biosynthesis (diacylglyceryl transfer). Its function is as follows. Catalyzes the transfer of the diacylglyceryl group from phosphatidylglycerol to the sulfhydryl group of the N-terminal cysteine of a prolipoprotein, the first step in the formation of mature lipoproteins. The polypeptide is Phosphatidylglycerol--prolipoprotein diacylglyceryl transferase (Nitratidesulfovibrio vulgaris (strain DP4) (Desulfovibrio vulgaris)).